The primary structure comprises 339 residues: Putative pectinesterase 10 (339 aa).

The N-terminal stretch at 1-28 (MKGVTIHNFCYSYFKVCLLVMSLAYGSA) is a signal peptide. N-linked (GlcNAc...) asparagine glycosylation is present at asparagine 112. Residue threonine 116 participates in substrate binding. Aspartate 169 acts as the Proton donor in catalysis. Aspartate 190 serves as the catalytic Nucleophile. Arginine 252 and tryptophan 254 together coordinate substrate. Asparagine 322 is a glycosylation site (N-linked (GlcNAc...) asparagine).

It belongs to the pectinesterase family. Expressed in siliques.

It is found in the secreted. The protein localises to the cell wall. The enzyme catalyses [(1-&gt;4)-alpha-D-galacturonosyl methyl ester](n) + n H2O = [(1-&gt;4)-alpha-D-galacturonosyl](n) + n methanol + n H(+). Its pathway is glycan metabolism; pectin degradation; 2-dehydro-3-deoxy-D-gluconate from pectin: step 1/5. Its function is as follows. Acts in the modification of cell walls via demethylesterification of cell wall pectin. The sequence is that of Putative pectinesterase 10 (PME10) from Arabidopsis thaliana (Mouse-ear cress).